Consider the following 520-residue polypeptide: Nonsense-mediated mRNA decay factor SMG9 (520 aa).

The interval 1-143 is disordered; that stretch reads MSESGHSQPG…KGEKEGQRPT (143 aa). An N-acetylserine modification is found at Ser2. 5 positions are modified to phosphoserine: Ser2, Ser4, Ser7, Ser32, and Ser53. Basic and acidic residues predominate over residues 36-53; that stretch reads GRERDYIAPWERERRDGS. Pro residues-rich tracts occupy residues 78–94 and 122–133; these read QPPPSTAPAAPPAPAPL and TAPPPPTAPAPP. A Phosphoserine modification is found at Ser451.

This sequence belongs to the SMG9 family. In terms of assembly, self-associates to form homodimers and forms heterodimers with SMG8; these assembly forms may represent SMG1C intermediate forms. Component of the SMG1C complex composed of SMG1, SMG8 and SMG9. Interacts with DHX34; the interaction is RNA-independent. Post-translationally, phosphorylated by SMG1.

Its function is as follows. Involved in nonsense-mediated decay (NMD) of mRNAs containing premature stop codons. Is recruited by release factors to stalled ribosomes together with SMG1 and SMG8 (forming the SMG1C protein kinase complex) and, in the SMG1C complex, is required for the efficient association between SMG1 and SMG8. Plays a role in brain, heart, and eye development. The polypeptide is Nonsense-mediated mRNA decay factor SMG9 (Mus musculus (Mouse)).